Consider the following 159-residue polypeptide: Siroheme decarboxylase beta subunit (159 aa).

152–157 (KTSMTY) lines the substrate pocket.

Belongs to the Ahb/Nir family. As to quaternary structure, forms a heterodimer composed of AhbA and AhbB.

It carries out the reaction siroheme + 2 H(+) = 12,18-didecarboxysiroheme + 2 CO2. Its pathway is porphyrin-containing compound metabolism; protoheme biosynthesis. Functionally, involved in siroheme-dependent heme b biosynthesis. Catalyzes the decarboxylation of siroheme into didecarboxysiroheme. Siroheme is decarboxylated to monodecarboxysiroheme, which is in turn decarboxylated to didecarboxysiroheme. The polypeptide is Siroheme decarboxylase beta subunit (Desulfovibrio desulfuricans (strain ATCC 27774 / DSM 6949 / MB)).